The sequence spans 783 residues: Transcription factor Sp3 (783 aa).

Basic and acidic residues predominate over residues 1–12; that stretch reads MTAPEKPVKQEE. The tract at residues 1 to 55 is disordered; the sequence is MTAPEKPVKQEEMAALDVDGGGGGGGHGEYLQQQQQQQQQHGNGAAAAAAQDTQP. The span at 19 to 28 shows a compositional bias: gly residues; it reads DGGGGGGGHG. Low complexity predominate over residues 29-51; it reads EYLQQQQQQQQQHGNGAAAAAAQ. Ser72 carries the post-translational modification Phosphoserine. A Glycyl lysine isopeptide (Lys-Gly) (interchain with G-Cter in SUMO) cross-link involves residue Lys122. Residues 140-239 form a transactivation domain (Gln-rich) region; sequence QYVLPLQNLQ…IPQTGQVQVQ (100 aa). A disordered region spans residues 302–340; sequence GQAMDSSDNSERTGERVSPDVNETNADTDLFVPTSSSSQ. A compositionally biased stretch (basic and acidic residues) spans 310 to 319; that stretch reads NSERTGERVS. The span at 322–340 shows a compositional bias: polar residues; the sequence is VNETNADTDLFVPTSSSSQ. The interval 352–501 is transactivation domain (Gln-rich); it reads QQNTNSLTTT…TPVQTLTLGQ (150 aa). Positions 463–471 match the 9aaTAD motif; the sequence is ITWQTFQVQ. A repressor domain region spans residues 536–622; it reads IQLHPGENAD…RGTNLGKKKQ (87 aa). An N6-acetyllysine; alternate modification is found at Lys553. A Glycyl lysine isopeptide (Lys-Gly) (interchain with G-Cter in SUMO); alternate cross-link involves residue Lys553. Residue Lys553 forms a Glycyl lysine isopeptide (Lys-Gly) (interchain with G-Cter in SUMO1); alternate linkage. Lys553 participates in a covalent cross-link: Glycyl lysine isopeptide (Lys-Gly) (interchain with G-Cter in SUMO2); alternate. Phosphoserine occurs at positions 565 and 568. A Glycyl lysine isopeptide (Lys-Gly) (interchain with G-Cter in SUMO2) cross-link involves residue Lys595. Residues 623–647 form a C2H2-type 1 zinc finger; the sequence is HICHIPGCGKVYGKTSHLRAHLRWH. Position 648 is a phosphoserine (Ser648). C2H2-type zinc fingers lie at residues 653 to 677 and 683 to 705; these read FICNWMFCGKRFTRSDELQRHRRTH and FVCPECSKRFMRSDHLAKHIKTH.

It belongs to the Sp1 C2H2-type zinc-finger protein family. In terms of assembly, interacts with HLTF; the interaction may be required for basal transcriptional activity of HLTF. Interacts with HDAC1; the interaction deacetylates SP3 and regulates its transcriptional activity. Interacts with HDAC2 (preferably the CK2-phosphorylated form); the interaction deacetylates SP3 and regulates its transcriptional activity. Ceramides can also regulate acetylation/deacetylation events through altering the interaction of HDAC with SP3. Interacts with MEIS2 isoform Meis2D and PBX1 isoform PBX1a. Acetylated by histone acetyltransferase p300, deacetylated by HDACs. Acetylation/deacetylation states regulate transcriptional activity. Acetylation appears to activate transcription. Alternate sumoylation and acetylation at Lys-553 also control transcriptional activity. Post-translationally, sumoylated on all isoforms. Sumoylated on 2 sites in longer isoforms with Lys-553 being the major site. Sumoylation at this site promotes nuclear localization to the nuclear periphery, nuclear dots and PML nuclear bodies. Sumoylation on Lys-553 represses the transactivation activity, except for the largest isoform which has little effect on transactivation. Alternate sumoylation and acetylation at Lys-553 also control transcriptional activity.

The protein localises to the nucleus. Its subcellular location is the PML body. Its function is as follows. Transcriptional factor that can act as an activator or repressor depending on isoform and/or post-translational modifications. Binds to GT and GC boxes promoter elements. Competes with SP1 for the GC-box promoters. Weak activator of transcription but can activate a number of genes involved in different processes such as cell-cycle regulation, hormone-induction and house-keeping. This chain is Transcription factor Sp3 (Sp3), found in Mus musculus (Mouse).